The sequence spans 156 residues: Small ribosomal subunit protein uS7 (156 aa).

The protein belongs to the universal ribosomal protein uS7 family. As to quaternary structure, part of the 30S ribosomal subunit. Contacts proteins S9 and S11.

In terms of biological role, one of the primary rRNA binding proteins, it binds directly to 16S rRNA where it nucleates assembly of the head domain of the 30S subunit. Is located at the subunit interface close to the decoding center, probably blocks exit of the E-site tRNA. In Blochmanniella pennsylvanica (strain BPEN), this protein is Small ribosomal subunit protein uS7.